The chain runs to 328 residues: Methionyl-tRNA formyltransferase (328 aa).

121 to 124 (SLLP) is a (6S)-5,6,7,8-tetrahydrofolate binding site.

It belongs to the Fmt family.

The catalysed reaction is L-methionyl-tRNA(fMet) + (6R)-10-formyltetrahydrofolate = N-formyl-L-methionyl-tRNA(fMet) + (6S)-5,6,7,8-tetrahydrofolate + H(+). Its function is as follows. Attaches a formyl group to the free amino group of methionyl-tRNA(fMet). The formyl group appears to play a dual role in the initiator identity of N-formylmethionyl-tRNA by promoting its recognition by IF2 and preventing the misappropriation of this tRNA by the elongation apparatus. In Burkholderia thailandensis (strain ATCC 700388 / DSM 13276 / CCUG 48851 / CIP 106301 / E264), this protein is Methionyl-tRNA formyltransferase.